We begin with the raw amino-acid sequence, 861 residues long: Cone cGMP-specific 3',5'-cyclic phosphodiesterase subunit alpha' (861 aa).

GAF domains follow at residues 75–224 (SAEQ…AVAL) and 256–433 (DVER…GWSL). Residues Ser97, Asn116, 169–172 (DKQT), and Thr176 contribute to the 3',5'-cyclic GMP site. A PDEase domain is found at 486–819 (EERQLLAILK…VEWKSLAEEY (334 aa)). The active-site Proton donor is the His562. His566, His602, Asp603, and Asp723 together coordinate a divalent metal cation. Over residues 826-839 (TEEEAGKQEEEASD) the composition is skewed to basic and acidic residues. A disordered region spans residues 826-861 (TEEEAGKQEEEASDGKAATDLGGSAEDKKSKTCLML). Cys858 carries the cysteine methyl ester modification. Cys858 carries the S-geranylgeranyl cysteine lipid modification. Residues 859-861 (LML) constitute a propeptide, removed in mature form.

The protein belongs to the cyclic nucleotide phosphodiesterase family. In terms of assembly, composed of two alpha' subunits that are associated with 3 smaller proteins of 11, 13, and 15 kDa. A divalent metal cation serves as cofactor.

Its subcellular location is the cell membrane. It catalyses the reaction 3',5'-cyclic GMP + H2O = GMP + H(+). Its function is as follows. As cone-specific cGMP phosphodiesterase, it plays an essential role in light detection and cone phototransduction by rapidly decreasing intracellular levels of cGMP. The chain is Cone cGMP-specific 3',5'-cyclic phosphodiesterase subunit alpha' (Pde6c) from Mus musculus (Mouse).